The primary structure comprises 277 residues: Eukaryotic translation initiation factor 3 subunit J (277 aa).

The interval 1–80 is disordered; that stretch reads MSWDDEDFAV…PAATKNTMLD (80 aa). Positions 23-43 are enriched in acidic residues; that stretch reads WDDEFAENDDEPVLESWEDEE. Over residues 50–75 the composition is skewed to low complexity; that stretch reads KAAAAAAAKAPKKASPSPAATPAATK. Residues 199-230 adopt a coiled-coil conformation; sequence TVENIRQTIATLNVLMKDKEREERQARLAKVK. The segment at 257–277 is disordered; the sequence is DNDFDLGGNDNFDDFGEDDFM. Acidic residues predominate over residues 267–277; it reads NFDDFGEDDFM.

This sequence belongs to the eIF-3 subunit J family. In terms of assembly, component of the eukaryotic translation initiation factor 3 (eIF-3) complex.

It localises to the cytoplasm. Component of the eukaryotic translation initiation factor 3 (eIF-3) complex, which is involved in protein synthesis of a specialized repertoire of mRNAs and, together with other initiation factors, stimulates binding of mRNA and methionyl-tRNAi to the 40S ribosome. The eIF-3 complex specifically targets and initiates translation of a subset of mRNAs involved in cell proliferation. This chain is Eukaryotic translation initiation factor 3 subunit J, found in Kluyveromyces lactis (strain ATCC 8585 / CBS 2359 / DSM 70799 / NBRC 1267 / NRRL Y-1140 / WM37) (Yeast).